The following is a 239-amino-acid chain: Adapter protein MecA (239 aa).

Residues 118–128 show a composition bias toward basic and acidic residues; that stretch reads EQRTKEKEAQG. The interval 118-137 is disordered; sequence EQRTKEKEAQGSKRQKSSAR.

This sequence belongs to the MecA family. As to quaternary structure, homodimer.

Its function is as follows. Enables the recognition and targeting of unfolded and aggregated proteins to the ClpC protease or to other proteins involved in proteolysis. This is Adapter protein MecA from Staphylococcus aureus (strain USA300).